Consider the following 1098-residue polypeptide: Sister-chromatid cohesion protein 3 (1098 aa).

The segment at 1–68 is disordered; sequence MEDSPQGLKR…RSRTHPPQQN (68 aa). A coiled-coil region spans residues 245 to 265; sequence RVDSLNKRLSVTHEQITTLED. Positions 275–360 constitute an SCD domain; that stretch reads FVHRYRDIDN…QRFSNRMIEM (86 aa). 3 coiled-coil regions span residues 632–653, 888–908, and 1009–1032; these read KLKD…EVKD, LESL…GREE, and LETL…ANVR. The tract at residues 1027–1077 is disordered; it reads EAANVRRRGRPRKRPETERKRLFDEQSGSDEDESISGGSDREDKLDEDAPL. Basic and acidic residues predominate over residues 1040 to 1050; that stretch reads RPETERKRLFD.

Belongs to the SCC3 family. In terms of assembly, part of the cohesin complex. Interacts with DEK3. As to expression, expressed in roots, mature leaves, buds and seedlings.

It localises to the nucleus. It is found in the chromosome. In terms of biological role, essential component of cohesin complex, a complex required for the cohesion of sister chromatids after DNA replication. The cohesin complex apparently forms a large proteinaceous ring within which sister chromatids can be trapped. At anaphase, the complex is cleaved and dissociates from chromatin, allowing sister chromatids to segregate. The cohesin complex may also play a role in spindle pole assembly during mitosis. Required for centromere cohesion maintenance at anaphase I and for the monopolar orientation of the kinetochores during both male and female meiosis. Also involved in mitosis. The polypeptide is Sister-chromatid cohesion protein 3 (Arabidopsis thaliana (Mouse-ear cress)).